Here is a 115-residue protein sequence, read N- to C-terminus: Biotrophy-associated secreted protein 1 (115 aa).

Positions 1–22 are cleaved as a signal peptide; that stretch reads MHVFNFAALFTVLATFTATAAA. Residues 24–115 are disordered; that stretch reads DQGSNTFDQR…GIRRVENYYP (92 aa). 2 stretches are compositionally biased toward basic and acidic residues: residues 46-55 and 91-115; these read IREEKQENVG and QQKE…NYYP.

The protein resides in the secreted. Its subcellular location is the host cytoplasm. Secreted effector involved in biotrophic colonization of plant cells. Induces an early, basal defense response in susceptible rice, including rapid callose deposition and ROS production in leaves and calli. Also promotes sporulation and mycelia growth suggesting a role across the whole process of interaction, from the biotrophic phase to sporulation. In Pyricularia oryzae (strain 70-15 / ATCC MYA-4617 / FGSC 8958) (Rice blast fungus), this protein is Biotrophy-associated secreted protein 1.